A 248-amino-acid polypeptide reads, in one-letter code: 3-deoxy-manno-octulosonate cytidylyltransferase (248 aa).

It belongs to the KdsB family.

The protein resides in the cytoplasm. It catalyses the reaction 3-deoxy-alpha-D-manno-oct-2-ulosonate + CTP = CMP-3-deoxy-beta-D-manno-octulosonate + diphosphate. Its pathway is nucleotide-sugar biosynthesis; CMP-3-deoxy-D-manno-octulosonate biosynthesis; CMP-3-deoxy-D-manno-octulosonate from 3-deoxy-D-manno-octulosonate and CTP: step 1/1. It functions in the pathway bacterial outer membrane biogenesis; lipopolysaccharide biosynthesis. Its function is as follows. Activates KDO (a required 8-carbon sugar) for incorporation into bacterial lipopolysaccharide in Gram-negative bacteria. This Shigella flexneri protein is 3-deoxy-manno-octulosonate cytidylyltransferase.